Consider the following 68-residue polypeptide: ATP synthase F(0) complex subunit 8 (68 aa).

A helical membrane pass occupies residues 8-24; it reads TWFTTILSMFLTLFIIF. Position 54 is an N6-acetyllysine; alternate (Lys-54). An N6-succinyllysine; alternate modification is found at Lys-54. Lys-57 bears the N6-acetyllysine mark.

This sequence belongs to the ATPase protein 8 family. In terms of assembly, component of the ATP synthase complex composed at least of ATP5F1A/subunit alpha, ATP5F1B/subunit beta, ATP5MC1/subunit c (homooctomer), MT-ATP6/subunit a, MT-ATP8/subunit 8, ATP5ME/subunit e, ATP5MF/subunit f, ATP5MG/subunit g, ATP5MK/subunit k, ATP5MJ/subunit j, ATP5F1C/subunit gamma, ATP5F1D/subunit delta, ATP5F1E/subunit epsilon, ATP5PF/subunit F6, ATP5PB/subunit b, ATP5PD/subunit d, ATP5PO/subunit OSCP. ATP synthase complex consists of a soluble F(1) head domain (subunits alpha(3) and beta(3)) - the catalytic core - and a membrane F(0) domain - the membrane proton channel (subunits c, a, 8, e, f, g, k and j). These two domains are linked by a central stalk (subunits gamma, delta, and epsilon) rotating inside the F1 region and a stationary peripheral stalk (subunits F6, b, d, and OSCP). Interacts with PRICKLE3.

Its subcellular location is the mitochondrion membrane. Subunit 8, of the mitochondrial membrane ATP synthase complex (F(1)F(0) ATP synthase or Complex V) that produces ATP from ADP in the presence of a proton gradient across the membrane which is generated by electron transport complexes of the respiratory chain. ATP synthase complex consist of a soluble F(1) head domain - the catalytic core - and a membrane F(1) domain - the membrane proton channel. These two domains are linked by a central stalk rotating inside the F(1) region and a stationary peripheral stalk. During catalysis, ATP synthesis in the catalytic domain of F(1) is coupled via a rotary mechanism of the central stalk subunits to proton translocation. In vivo, can only synthesize ATP although its ATP hydrolase activity can be activated artificially in vitro. Part of the complex F(0) domain. This Hippopotamus amphibius (Hippopotamus) protein is ATP synthase F(0) complex subunit 8.